Reading from the N-terminus, the 239-residue chain is 1-(5-phosphoribosyl)-5-[(5-phosphoribosylamino)methylideneamino] imidazole-4-carboxamide isomerase (239 aa).

The active-site Proton acceptor is the Asp-8. The active-site Proton donor is Asp-129.

The protein belongs to the HisA/HisF family.

It is found in the cytoplasm. The enzyme catalyses 1-(5-phospho-beta-D-ribosyl)-5-[(5-phospho-beta-D-ribosylamino)methylideneamino]imidazole-4-carboxamide = 5-[(5-phospho-1-deoxy-D-ribulos-1-ylimino)methylamino]-1-(5-phospho-beta-D-ribosyl)imidazole-4-carboxamide. Its pathway is amino-acid biosynthesis; L-histidine biosynthesis; L-histidine from 5-phospho-alpha-D-ribose 1-diphosphate: step 4/9. This chain is 1-(5-phosphoribosyl)-5-[(5-phosphoribosylamino)methylideneamino] imidazole-4-carboxamide isomerase, found in Bacillus cereus (strain AH820).